We begin with the raw amino-acid sequence, 648 residues long: Replication restart protein PriA (648 aa).

Residues 131–297 enclose the Helicase ATP-binding domain; the sequence is TILNESNKPT…KTHKYQLVTL (167 aa). 144–151 contacts ATP; it reads GVTGSGKT. A DEAH box motif is present at residues 240–243; the sequence is DEEH. The Zn(2+) site is built by cysteine 358, cysteine 361, cysteine 367, cysteine 370, cysteine 385, cysteine 388, cysteine 398, and cysteine 401. Residues 375-548 form the Helicase C-terminal domain; the sequence is VLHKATKKLE…RFFTNELEIR (174 aa).

This sequence belongs to the helicase family. PriA subfamily. In terms of assembly, component of the replication restart primosome. Zn(2+) serves as cofactor.

The catalysed reaction is Couples ATP hydrolysis with the unwinding of duplex DNA by translocating in the 3'-5' direction.. It catalyses the reaction ATP + H2O = ADP + phosphate + H(+). In terms of biological role, initiates the restart of stalled replication forks, which reloads the replicative helicase on sites other than the origin of replication. Recognizes and binds to abandoned replication forks and remodels them to uncover a helicase loading site. Promotes assembly of the primosome at these replication forks. This Rickettsia prowazekii (strain Madrid E) protein is Replication restart protein PriA.